A 249-amino-acid chain; its full sequence is Enolase-phosphatase E1 (249 aa).

This sequence belongs to the HAD-like hydrolase superfamily. MasA/MtnC family. In terms of assembly, monomer. Mg(2+) is required as a cofactor.

It catalyses the reaction 5-methylsulfanyl-2,3-dioxopentyl phosphate + H2O = 1,2-dihydroxy-5-(methylsulfanyl)pent-1-en-3-one + phosphate. Its pathway is amino-acid biosynthesis; L-methionine biosynthesis via salvage pathway; L-methionine from S-methyl-5-thio-alpha-D-ribose 1-phosphate: step 3/6. The protein operates within amino-acid biosynthesis; L-methionine biosynthesis via salvage pathway; L-methionine from S-methyl-5-thio-alpha-D-ribose 1-phosphate: step 4/6. Its function is as follows. Bifunctional enzyme that catalyzes the enolization of 2,3-diketo-5-methylthiopentyl-1-phosphate (DK-MTP-1-P) into the intermediate 2-hydroxy-3-keto-5-methylthiopentenyl-1-phosphate (HK-MTPenyl-1-P), which is then dephosphorylated to form the acireductone 1,2-dihydroxy-3-keto-5-methylthiopentene (DHK-MTPene). The polypeptide is Enolase-phosphatase E1 (Synechococcus sp. (strain RCC307)).